Reading from the N-terminus, the 273-residue chain is tRNA (guanine-N(7)-)-methyltransferase A (273 aa).

Residues G86, E109, R111, N142, A143, and L162 each contribute to the S-adenosyl-L-methionine site. Residue D165 is part of the active site. The tract at residues 166 to 174 is alphaC helix; the sequence is PHFKKTKHK. T240 and E242 together coordinate S-adenosyl-L-methionine. The tract at residues 240–248 is alpha6 helix; the sequence is TEEGKKVQR.

The protein belongs to the class I-like SAM-binding methyltransferase superfamily. TrmB family. Catalytic component of the METTL1-WDR4 complex, composed of mettl1 and wdr4.

The protein resides in the nucleus. It carries out the reaction guanosine(46) in tRNA + S-adenosyl-L-methionine = N(7)-methylguanosine(46) in tRNA + S-adenosyl-L-homocysteine. The catalysed reaction is a guanosine in mRNA + S-adenosyl-L-methionine = an N(7)-methylguanosine in mRNA + S-adenosyl-L-homocysteine. The enzyme catalyses a guanosine in miRNA + S-adenosyl-L-methionine = an N(7)-methylguanosine in miRNA + S-adenosyl-L-homocysteine. It functions in the pathway tRNA modification; N(7)-methylguanine-tRNA biosynthesis. Functionally, catalytic component of METTL1-WDR4 methyltransferase complex that mediates the formation of N(7)-methylguanine in a subset of RNA species, such as tRNAs, mRNAs and microRNAs (miRNAs). Catalyzes the formation of N(7)-methylguanine at position 46 (m7G46) in a large subset of tRNAs that contain the 5'-RAGGU-3' motif within the variable loop. M7G46 interacts with C13-G22 in the D-loop to stabilize tRNA tertiary structure and protect tRNAs from decay. Also acts as a methyltransferase for a subset of internal N(7)-methylguanine in mRNAs. Internal N(7)-methylguanine methylation of mRNAs in response to stress promotes their relocalization to stress granules, thereby suppressing their translation. Also methylates a specific subset of miRNAs. The sequence is that of tRNA (guanine-N(7)-)-methyltransferase A (mettl1-A) from Xenopus tropicalis (Western clawed frog).